The primary structure comprises 874 residues: AP-1 complex subunit gamma-1 (874 aa).

The GAE domain maps to 761-873 (TVAKSHTVYT…QDQTDWAQPS (113 aa)).

This sequence belongs to the adaptor complexes large subunit family. In terms of assembly, adaptor protein complex 1 (AP-1) is a heterotetramer composed of two large adaptins (gamma-type subunit APL4 and beta-type subunit APL2), a medium adaptin (mu-type subunit APM1) and a small adaptin (sigma-type subunit APS1). AP-1 interacts with clathrin.

It localises to the cytoplasmic vesicle. The protein resides in the clathrin-coated vesicle membrane. Its subcellular location is the golgi apparatus. Functionally, adaptins are components of the adaptor complexes which link clathrin to receptors in coated vesicles. Clathrin-associated protein complexes are believed to interact with the cytoplasmic tails of membrane proteins, leading to their selection and concentration. The AP-1 complex interacts directly with clathrin. Required for apical growth extension. In Mycosarcoma maydis (Corn smut fungus), this protein is AP-1 complex subunit gamma-1 (APL4).